A 587-amino-acid polypeptide reads, in one-letter code: MKRSMYAGRVREEHIGQEITLKGWVGRRRDLGGLIFIDLRDREGIMQLVINPEKVSAEVMATAESLRSEFVIEVTGQVAAREQANDKLPTGAVELNVTALIVLNTAKTTPFEIKDGIEANDDTRLRYRYLDLRRPEMLENLKLRAKVTHSIRNYLDELEFIDVETPFLSKSTPEGARDYLVPSRVNKGHFYALPQSPQITKQLLMNAGFDRYYQIVKCFRDEDLRGDRQPEFTQVDLETSFLTEQEIQDITEGLIARVMKETKGIEVTLPFPRMKYDDAMALYGSDKPDTRFDMLLQDLTEVVKGVDFKVFSEAPAVKAIVVKGAADNYSRKDIDKMTEVAKQYGAKGLAWVKVVDGELNGPVAKFLTGIQEELTTALALEDKDLVLFVADTLEVANATLGALRGRIAKELGLIDNDKFNFLWVVDWPMFEWSEEEGRYMSAHHPFTLPQEETAHELEGDLAKVRAIAYDIVLNGYELGGGSLRINQKDLQERMFKALGFSTEEANDQFGFLLEAMDYGFPPHGGLAIGLDRFVMLLAGEENIREVIAFPKNNKATDPMTQAPSTVALKQLEELSLQVEEDETNKTN.

Glu-174 contributes to the L-aspartate binding site. Residues 198–201 (QITK) form an aspartate region. Arg-220 is an L-aspartate binding site. Residues 220–222 (RDE) and Gln-229 each bind ATP. L-aspartate is bound at residue His-443. Glu-477 contacts ATP. Position 484 (Arg-484) interacts with L-aspartate. ATP is bound at residue 529–532 (GLDR).

It belongs to the class-II aminoacyl-tRNA synthetase family. Type 1 subfamily. As to quaternary structure, homodimer.

It is found in the cytoplasm. It carries out the reaction tRNA(Asp) + L-aspartate + ATP = L-aspartyl-tRNA(Asp) + AMP + diphosphate. Functionally, catalyzes the attachment of L-aspartate to tRNA(Asp) in a two-step reaction: L-aspartate is first activated by ATP to form Asp-AMP and then transferred to the acceptor end of tRNA(Asp). The polypeptide is Aspartate--tRNA ligase (Streptococcus pneumoniae (strain ATCC 700669 / Spain 23F-1)).